The sequence spans 693 residues: Bacterial dynamin-like protein (693 aa).

The Cytoplasmic portion of the chain corresponds to 1–521; it reads MVNQVATDRF…DNSPGWAKWA (521 aa). In terms of domain architecture, Dynamin-type G spans 66-313; sequence QQGVFRLLVL…QADLDGTGFP (248 aa). The segment at 76 to 83 is G1 motif; the sequence is GDMKRGKS. 79–84 is a GTP binding site; it reads KRGKST. Positions 102 to 103 are G2 motif; that stretch reads CT. Positions 180–183 are G3 motif; the sequence is DSPG. 235 to 241 serves as a coordination point for GTP; sequence FLVNAWD. A G4 motif region spans residues 238–241; that stretch reads NAWD. A region of interest (G5 motif) is located at residue Asn268. 292-293 is a GTP binding site; that stretch reads SI. A middle domain region spans residues 311-571; it reads GFPKFMDSLN…TAVTGILLGP (261 aa). A coiled-coil region spans residues 347 to 378; sequence REAVARRIPLLEQDVNELKKRIDSVEPEFNKL. The stretch at 522–574 is an intramembrane region; the sequence is MGLLSLSKGNLAGFALAGAGFDWKNILLNYFTVIGIGGIITAVTGILLGPIGF. The segment at 572-606 is paddle domain; sequence IGFALLGLGVGFLQADQARRELVKTAKKELVKHLP. Residues 575-693 are Cytoplasmic-facing; that stretch reads ALLGLGVGFL…AYSNLLAYYS (119 aa). The interval 607–693 is GED; it reads QVAHEQSQVV…AYSNLLAYYS (87 aa). A coiled-coil region spans residues 661–688; that stretch reads ESEFNRLKNLQEDVIAQLQKIEAAYSNL.

Belongs to the TRAFAC class dynamin-like GTPase superfamily. Dynamin/Fzo/YdjA family. Mitofusin subfamily. In terms of assembly, homodimer. Self-assembles in the presence of GMP-PNP and liposomes, and probably also in the presence of GTP.

Its subcellular location is the cell inner membrane. The catalysed reaction is GTP + H2O = GDP + phosphate + H(+). Functionally, dynamin-related GTPase probably involved in membrane remodeling. Lipid and nucleotide-binding are thought to induce a large intramolecular rearrangement, leading to assembly on lipid bilayers and possible membrane curving. In the presence of the non-hydrolyzable GTP analog GMP-PNP self-assembles on a lipid bilayer; this does not stimulate subsequent GTPase activity. Does not bind lipids in the presence of GDP; perhaps GTP hydrolysis disrupts membrane-binding. The chain is Bacterial dynamin-like protein from Nostoc punctiforme (strain ATCC 29133 / PCC 73102).